The primary structure comprises 481 residues: Zinc metalloproteinase/disintegrin (481 aa).

A signal peptide spans 1–20 (MIQVLLVTICLAVFPYQGSS). Positions 21–190 (IILESGNVDD…KASQLYLTPE (170 aa)) are excised as a propeptide. The 196-residue stretch at 197-392 (RHIELAIVVD…KKPQCILNAP (196 aa)) folds into the Peptidase M12B domain. The Ca(2+) site is built by Glu200 and Asp284. 3 cysteine pairs are disulfide-bonded: Cys308–Cys387, Cys349–Cys371, and Cys351–Cys354. Zn(2+) is bound at residue His333. Glu334 is a catalytic residue. Zn(2+) contacts are provided by His337 and His343. Residues Cys387 and Asn390 each contribute to the Ca(2+) site. The propeptide occupies 393–410 (LRTDTVSTPISGNEFLEA). The Disintegrin domain occupies 400 to 481 (TPISGNEFLE…ADCPRNGLYG (82 aa)). 6 disulfides stabilise this stretch: Cys414-Cys429, Cys416-Cys424, Cys423-Cys446, Cys437-Cys443, Cys442-Cys467, and Cys455-Cys474. The Cell attachment site motif lies at 459 to 461 (RGD).

It belongs to the venom metalloproteinase (M12B) family. P-II subfamily. P-IIa sub-subfamily. In terms of assembly, monomer. Zn(2+) serves as cofactor. As to expression, expressed by the venom gland.

It is found in the secreted. In terms of biological role, impairs hemostasis in the envenomed animal. Functionally, inhibits platelet aggregation induced by ADP and collagen. Acts by inhibiting fibrinogen interaction with platelet receptors GPIIb/GPIIIa (ITGA2B/ITGB3). Has antitumor-growth activity. The protein is Zinc metalloproteinase/disintegrin of Protobothrops jerdonii (Jerdon's pitviper).